A 434-amino-acid polypeptide reads, in one-letter code: Arrestin domain-containing protein 1 (434 aa).

The tract at residues Ser-292 to Ser-349 is disordered. Polar residues predominate over residues Val-330–Leu-343. Short sequence motifs (PPxY motif) lie at residues Pro-401–Tyr-404 and Pro-414–Tyr-417.

The protein belongs to the arrestin family. In terms of assembly, interacts (via PPxY motifs) with ITCH (via WW domains); the interaction is direct and participates in the recruitment of the ubiquitin-protein ligase ITCH to the NOTCH1 receptor. Interacts with ARRB1 and ARRB2; the interaction is direct. Interacts with TSG101; may recruit TSG101 to the plasma membrane. Interacts (via PPxY motifs) with WWP2 (via WW domains); ubiquitinates ARRDC1. Interacts with SLC11A2; controls the incorporation of SLC11A2 into extracellular vesicles through an ubiquitination-dependent mechanism. Interacts with WWP1 (via WW domains). Interacts with NEDD4 (via WW domains). Interacts with PDCD6IP. Post-translationally, ubiquitinated. Ubiquitination by WWP2; promotes localization to extracellular microvesicles. Ubiquitinated by WWP1.

Its subcellular location is the cell membrane. Functions as an adapter recruiting ubiquitin-protein ligases to their specific substrates. Through an ubiquitination-dependent mechanism plays for instance a role in the incorporation of SLC11A2 into extracellular vesicles. More generally, plays a role in the extracellular transport of proteins between cells through the release in the extracellular space of microvesicles. By participating to the ITCH-mediated ubiquitination and subsequent degradation of NOTCH1, negatively regulates the NOTCH signaling pathway. This chain is Arrestin domain-containing protein 1, found in Mus musculus (Mouse).